A 423-amino-acid chain; its full sequence is Histidine--tRNA ligase (423 aa).

This sequence belongs to the class-II aminoacyl-tRNA synthetase family. In terms of assembly, homodimer.

It localises to the cytoplasm. The catalysed reaction is tRNA(His) + L-histidine + ATP = L-histidyl-tRNA(His) + AMP + diphosphate + H(+). The protein is Histidine--tRNA ligase of Shewanella loihica (strain ATCC BAA-1088 / PV-4).